The chain runs to 188 residues: Elongation factor P (188 aa).

This sequence belongs to the elongation factor P family.

It is found in the cytoplasm. It functions in the pathway protein biosynthesis; polypeptide chain elongation. In terms of biological role, involved in peptide bond synthesis. Stimulates efficient translation and peptide-bond synthesis on native or reconstituted 70S ribosomes in vitro. Probably functions indirectly by altering the affinity of the ribosome for aminoacyl-tRNA, thus increasing their reactivity as acceptors for peptidyl transferase. This chain is Elongation factor P, found in Pelodictyon phaeoclathratiforme (strain DSM 5477 / BU-1).